Reading from the N-terminus, the 326-residue chain is Flap endonuclease 1 (326 aa).

The segment at 1 to 98 is N-domain; the sequence is MGVQFGDFIP…KTRKVRREMK (98 aa). 7 residues coordinate Mg(2+): D27, D80, E152, E154, D173, D175, and D224. The segment at 116–245 is I-domain; sequence EAAKYAKRVS…KRAYELVRSG (130 aa). Positions 317–325 are interaction with PCNA; it reads KQKTLDAWF.

This sequence belongs to the XPG/RAD2 endonuclease family. FEN1 subfamily. As to quaternary structure, interacts with PCNA. PCNA stimulates the nuclease activity without altering cleavage specificity. Requires Mg(2+) as cofactor.

Its function is as follows. Structure-specific nuclease with 5'-flap endonuclease and 5'-3' exonuclease activities involved in DNA replication and repair. During DNA replication, cleaves the 5'-overhanging flap structure that is generated by displacement synthesis when DNA polymerase encounters the 5'-end of a downstream Okazaki fragment. Binds the unpaired 3'-DNA end and kinks the DNA to facilitate 5' cleavage specificity. Cleaves one nucleotide into the double-stranded DNA from the junction in flap DNA, leaving a nick for ligation. Also involved in the base excision repair (BER) pathway. Acts as a genome stabilization factor that prevents flaps from equilibrating into structures that lead to duplications and deletions. Also possesses 5'-3' exonuclease activity on nicked or gapped double-stranded DNA. The protein is Flap endonuclease 1 of Methanocaldococcus jannaschii (strain ATCC 43067 / DSM 2661 / JAL-1 / JCM 10045 / NBRC 100440) (Methanococcus jannaschii).